The chain runs to 514 residues: Peptide chain release factor 3 (514 aa).

A tr-type G domain is found at 8-268; that stretch reads KKRRTFAIIS…TFLKFAPEPH (261 aa). GTP is bound by residues 17–24, 85–89, and 139–142; these read SHPDAGKT, DTPGH, and NKLD.

It belongs to the TRAFAC class translation factor GTPase superfamily. Classic translation factor GTPase family. PrfC subfamily.

The protein localises to the cytoplasm. Increases the formation of ribosomal termination complexes and stimulates activities of RF-1 and RF-2. It binds guanine nucleotides and has strong preference for UGA stop codons. It may interact directly with the ribosome. The stimulation of RF-1 and RF-2 is significantly reduced by GTP and GDP, but not by GMP. This Streptococcus thermophilus (strain CNRZ 1066) protein is Peptide chain release factor 3.